A 331-amino-acid polypeptide reads, in one-letter code: Glyceraldehyde-3-phosphate dehydrogenase (331 aa).

NAD(+) is bound by residues 12–13 (RI), D34, R78, and T120. Residues 149 to 151 (SCT), T180, 209 to 210 (TG), and R232 contribute to the D-glyceraldehyde 3-phosphate site. C150 serves as the catalytic Nucleophile. Position 314 (N314) interacts with NAD(+).

The protein belongs to the glyceraldehyde-3-phosphate dehydrogenase family. In terms of assembly, homotetramer.

It is found in the cytoplasm. The enzyme catalyses D-glyceraldehyde 3-phosphate + phosphate + NAD(+) = (2R)-3-phospho-glyceroyl phosphate + NADH + H(+). It participates in carbohydrate degradation; glycolysis; pyruvate from D-glyceraldehyde 3-phosphate: step 1/5. Catalyzes the oxidative phosphorylation of glyceraldehyde 3-phosphate (G3P) to 1,3-bisphosphoglycerate (BPG) using the cofactor NAD. The first reaction step involves the formation of a hemiacetal intermediate between G3P and a cysteine residue, and this hemiacetal intermediate is then oxidized to a thioester, with concomitant reduction of NAD to NADH. The reduced NADH is then exchanged with the second NAD, and the thioester is attacked by a nucleophilic inorganic phosphate to produce BPG. This is Glyceraldehyde-3-phosphate dehydrogenase (gapA) from Salmonella typhi.